A 152-amino-acid chain; its full sequence is Methylglyoxal synthase (152 aa).

The MGS-like domain maps to 5–152 (TRTVQAQKHI…YQLYLQQRLK (148 aa)). Substrate is bound by residues H19, K23, 45-48 (TGTT), and 65-66 (SG). D71 serves as the catalytic Proton donor/acceptor. A substrate-binding site is contributed by H98.

The protein belongs to the methylglyoxal synthase family.

The enzyme catalyses dihydroxyacetone phosphate = methylglyoxal + phosphate. In terms of biological role, catalyzes the formation of methylglyoxal from dihydroxyacetone phosphate. The polypeptide is Methylglyoxal synthase (Erwinia tasmaniensis (strain DSM 17950 / CFBP 7177 / CIP 109463 / NCPPB 4357 / Et1/99)).